The sequence spans 404 residues: Probable tRNA sulfurtransferase (404 aa).

Positions 60–165 constitute a THUMP domain; the sequence is QPVVEALKLV…DEAAYISYEE (106 aa). Residues 183 to 184, 208 to 209, Arg265, Gly287, and Gln296 contribute to the ATP site; these read ML and HF.

It belongs to the ThiI family.

Its subcellular location is the cytoplasm. The catalysed reaction is [ThiI sulfur-carrier protein]-S-sulfanyl-L-cysteine + a uridine in tRNA + 2 reduced [2Fe-2S]-[ferredoxin] + ATP + H(+) = [ThiI sulfur-carrier protein]-L-cysteine + a 4-thiouridine in tRNA + 2 oxidized [2Fe-2S]-[ferredoxin] + AMP + diphosphate. The enzyme catalyses [ThiS sulfur-carrier protein]-C-terminal Gly-Gly-AMP + S-sulfanyl-L-cysteinyl-[cysteine desulfurase] + AH2 = [ThiS sulfur-carrier protein]-C-terminal-Gly-aminoethanethioate + L-cysteinyl-[cysteine desulfurase] + A + AMP + 2 H(+). Its pathway is cofactor biosynthesis; thiamine diphosphate biosynthesis. Functionally, catalyzes the ATP-dependent transfer of a sulfur to tRNA to produce 4-thiouridine in position 8 of tRNAs, which functions as a near-UV photosensor. Also catalyzes the transfer of sulfur to the sulfur carrier protein ThiS, forming ThiS-thiocarboxylate. This is a step in the synthesis of thiazole, in the thiamine biosynthesis pathway. The sulfur is donated as persulfide by IscS. The chain is Probable tRNA sulfurtransferase from Streptococcus pyogenes serotype M6 (strain ATCC BAA-946 / MGAS10394).